A 1756-amino-acid chain; its full sequence is MMSIAQVRSAGSAGNYYTDKDNYYVLGSMGERWAGRGAEQLGLQGSVDKDVFTRLLEGRLPDGADLSRMQDGSNRHRPGYDLTFSAPKSVSMMAMLGGDKRLIDAHNQAVDFAVRQVEALASTRVMTDGQSETVLTGNLVMALFNHDTSRDQEPQLHTHAVVANVTQHNGEWKTLSSDKVGKTGFIENVYANQIAFGRLYREKLKEQVEALGYETEVVGKHGMWEMPGVPVEAFSGRSQTIREAVGEDASLKSRDVAALDTRKSKQHVDPEIKMAEWMQTLKETGFDIRAYRDAADQRADLRTLTPGPASQDGPDVQQAVTQAIAGLSERKVQFTYTDVLARTVGILPPENGVIERARAGIDEAISREQLIPLDREKGLFTSGIHVLDELSVRALSRDIMKQNRVTVHPEKSVPRTAGYSDAVSVLAQDRPSLAIVSGQGGAAGQRERVAELVMMAREQGREVQIIAADRRSQMNMKQDERLSGELITGRRQLLEGMAFTPGSTVIVDQGEKLSLKETLTLLDGAARHNVQVLITDSGQRTGTGSALMAMKDAGVNTYRWQGGEQRPATIISEPDRNVRYARLAGDFAASVKAGEESVAQVSGVREQAILTQAIRSELKTQGVLGLPEVTMTALSPVWLDSRSRYLRDMYRPGMVMEQWNPETRSHDRYVIDRVTAQSHSLTLRDAQGETQVVRISSLDSSWSLFRPEKMPVADGERLRVTGKIPGLRVSGGDRLQVASVSEDAMTVVVPGRAEPATLPVSDSPFTALKLENGWVETPGHSVSDSATVFASVTQMAMDNATLNGLARSGRDVRLYSSLDETRTAEKLARHPSFTVVSEQIKTRAGETSLETAISHQKSALHTPAQQAIHLALPVVESKKLAFSMVDLLTEAKSFAAEGTGFTELGGEINAQIKRGDLLYVDVAKGYGTGLLVSRASYEAEKSILRHILEGKEAVMPLMERVPGELMEKLTSGQRAATRMILETSDRFTVVQGYAGVGKTTQFRAVMSAVNMLPESERPRVVGLGPTHRAVGEMRSAGVDAQTLASFLHDTQLQQRSGETPDFSNTLFLLDESSMVGNTDMARAYALIAAGGGRAVASGDTDQLQAIAPGQPFRLQQTRSAADVAIMKEIVRQTPELREAVYSLINRDVERALSGLESVKPSQVPRQEGAWAPEHSVTEFSHSQEAKLAEAQQKAMLKGEAFPDVPMTLYEAIVRDYTGRTPEAREQTLIVTHLNEDRRVLNSMIHDVREKAGELGKEQVMVPVLNTANIRDGELRRLSTWETHRDALVLVDNVYHRIAGISKDDGLITLQDAEGNTRLISPREAVAEGVTLYTPDTIRVGTGDRMRFTKSDRERGYVANSVWTVTAVSGDSVTLSDGQQTREIRPGQEQAEQHIDLAYAITAHGAQGASETFAIALEGTEGNRKLMAGFESAYVALSRMKQHVQVYTDNRQGWTDAINNAVQKGTAHDVFEPKPDREVMNAERLFSTARELRDVAAGRAVLRQAGLAGGDSPARFIAPGRKYPQPYVALPAFDRNGKSAGIWLNPLTTDDGNGLRGFSGEGRVKGSGDAQFVALQGSRNGESLLADNMQDGVRIARDNPDSGVVVRIAGEGRPWNPGAITGGRVWGDIPDNSVQPGAGNGEPVTAEVLAQRQAEEAIRRETERRADEIVRKMAENKPDLPDGKTEQAVREIAGQERDRAAITEREAALPEGVLREPQRVREAVREIARENLLQERLQQMERDMVRDLQKEKTLGGD.

The segment at M1–R330 is DNA relaxase. Residue Y16 is the O-(5'-phospho-DNA)-tyrosine intermediate; for relaxase activity of the active site. The Relaxase role is filled by Y17. H146, H157, and H159 together coordinate Mg(2+). Positions G950–V1500 are DNA helicase I. G992–T999 is an ATP binding site. Residues R1534–D1756 form a required for DNA transfer, may interact with TraM region. Positions Q1717 to L1753 form a coiled coil.

The protein to TraI of plasmid IncFII R100. Monomer. Part of the relaxosome, a complex composed of plasmid-encodes TraI, TraM, TraY and host-encoded IHF bound to the F plasmid origin of transfer (oriT). Directly contacts coupling protein TraD. Seems to directly contact TraM via its C-terminus. Mg(2+) is required as a cofactor.

Its subcellular location is the cytoplasm. It catalyses the reaction ATP-independent breakage of single-stranded DNA, followed by passage and rejoining.. The enzyme catalyses ATP + H2O = ADP + phosphate + H(+). With respect to regulation, nicking activity (relaxase) is inhibited by bisphosphonates such as the non-competitive inhibitor imidobisphosphate (PNP), etidronic acid (ETIDRO) and clodronic acid (CLODRO). The latter 2 are competitive inhibitors, and are already used clinically to treat bone loss (marketed as Didronel and Bonefos). All 3 compounds also inhibit conjugation and kill F plasmid-containing cells. They are specific to dual tyrosine relaxases such as those found in F and related R conjugative plasmids. In terms of biological role, conjugative DNA transfer (CDT) is the unidirectional transfer of ssDNA plasmid from a donor to a recipient cell. It is the central mechanism by which antibiotic resistance and virulence factors are propagated in bacterial populations. Part of the relaxosome, which facilitates a site- and strand-specific cut in the origin of transfer by TraI, at the nic site. Relaxosome formation requires binding of IHF and TraY to the oriT region, which then facilitates binding of TraI relaxase. TraI forms a covalent 5'-phosphotyrosine intermediate linkage to the ssDNA. The transesterified T-strand moves from the donor cell to the recipient cell in a 5'to 3' direction, with the DNA helicase activity of TraI unwinding the DNA. DNA transfer occurs via the conjugative pore (transferosome) an intercellular junction mediated by a type IV secretion system, with TraD providing the means to link the relaxosome to the conjugative pore. The relaxase completes DNA transfer by reversing the covalent phosphotyrosine linkage and releasing the T-strand. Functionally, traI has also been identified as DNA helicase I. DNA. helicase I is a potent, highly processive DNA-dependent ATPase, able to unwind about 1.1 kb dsDNA per second in a 5' to 3' manner. This is Multifunctional conjugation protein TraI (traI) from Escherichia coli (strain K12).